Consider the following 162-residue polypeptide: CD-NTase-associated protein 7 (162 aa).

Residues 138–162 (HSGLTQSGGREYSSNGYGMQRKDYN) are disordered. Polar residues predominate over residues 139–154 (SGLTQSGGREYSSNGY).

It belongs to the HORMA family. HORMA1 subfamily. In terms of assembly, forms complexes with CdnC with 1:1 and 2:2 stoichimetry, and a 1:1:6 CdnC:Cap7:Cap6 complex.

Sensor protein of a CBASS antivirus system. CBASS (cyclic oligonucleotide-based antiphage signaling system) provides immunity against bacteriophage. The CD-NTase protein synthesizes cyclic nucleotides in response to infection; these serve as specific second messenger signals. The signals activate a diverse range of effectors, leading to bacterial cell death and thus abortive phage infection. A type III CBASS system. Expression of this CBASS system (Cap18-Cap6-Cap7-CdnC-CapW-Cap17) in a susceptible E.coli (strain MG1655) confers resistance to bacteriophage P1. The sensor protein for this CBASS system. Binds to a closure peptide, which allows it to activate CdnC for second messenger synthesis. This Escherichia coli (strain KTE188) protein is CD-NTase-associated protein 7.